Here is a 425-residue protein sequence, read N- to C-terminus: UPF0597 protein VFMJ11_0655 (425 aa).

This sequence belongs to the UPF0597 family.

In Aliivibrio fischeri (strain MJ11) (Vibrio fischeri), this protein is UPF0597 protein VFMJ11_0655.